The primary structure comprises 234 residues: Segregation and condensation protein A (234 aa).

The protein belongs to the ScpA family. In terms of assembly, component of a cohesin-like complex composed of ScpA, ScpB and the Smc homodimer, in which ScpA and ScpB bind to the head domain of Smc. The presence of the three proteins is required for the association of the complex with DNA.

The protein localises to the cytoplasm. Participates in chromosomal partition during cell division. May act via the formation of a condensin-like complex containing Smc and ScpB that pull DNA away from mid-cell into both cell halves. The protein is Segregation and condensation protein A of Streptococcus pyogenes serotype M3 (strain ATCC BAA-595 / MGAS315).